A 329-amino-acid polypeptide reads, in one-letter code: Mitochondrial nuclease (329 aa).

His-138 functions as the Proton acceptor in the catalytic mechanism. A Mg(2+)-binding site is contributed by Asn-170.

Belongs to the DNA/RNA non-specific endonuclease family. In terms of assembly, homodimer. Mn(2+) serves as cofactor. Requires Mg(2+) as cofactor.

It localises to the mitochondrion inner membrane. This enzyme has both RNase and DNase activity. In Saccharomyces cerevisiae (strain ATCC 204508 / S288c) (Baker's yeast), this protein is Mitochondrial nuclease (NUC1).